Consider the following 136-residue polypeptide: 5-hydroxyisourate hydrolase (136 aa).

A signal peptide spans 1–20 (MKRYILATVIASLVAAPAMA). His31, Arg69, and Tyr133 together coordinate substrate.

This sequence belongs to the transthyretin family. 5-hydroxyisourate hydrolase subfamily. Homotetramer.

Its subcellular location is the periplasm. The enzyme catalyses 5-hydroxyisourate + H2O = 5-hydroxy-2-oxo-4-ureido-2,5-dihydro-1H-imidazole-5-carboxylate + H(+). Its function is as follows. Catalyzes the hydrolysis of 5-hydroxyisourate (HIU) to 2-oxo-4-hydroxy-4-carboxy-5-ureidoimidazoline (OHCU). This is 5-hydroxyisourate hydrolase (hiuH) from Salmonella typhimurium (strain LT2 / SGSC1412 / ATCC 700720).